We begin with the raw amino-acid sequence, 130 residues long: MAKVPSRSPRKRVRKQVADGMAHIHASFNNTIITITDRQGNALSWATSGGSGFRGSRKSTPFAAQVAAERAGTAAQDYGVKNLEVFVKGPGPGRESAIRALNSVGYKITNITDVTPIPHNGCRPPKKRRV.

Belongs to the universal ribosomal protein uS11 family. Part of the 30S ribosomal subunit. Interacts with proteins S7 and S18. Binds to IF-3.

Functionally, located on the platform of the 30S subunit, it bridges several disparate RNA helices of the 16S rRNA. Forms part of the Shine-Dalgarno cleft in the 70S ribosome. The chain is Small ribosomal subunit protein uS11 from Shewanella halifaxensis (strain HAW-EB4).